The following is a 430-amino-acid chain: Adenylosuccinate synthetase (430 aa).

Residues 12–18 (GDEGKGK) and 40–42 (GHT) contribute to the GTP site. The Proton acceptor role is filled by aspartate 13. Mg(2+)-binding residues include aspartate 13 and glycine 40. Residues 13–16 (DEGK), 38–41 (NAGH), threonine 130, arginine 144, glutamine 224, threonine 239, and arginine 303 each bind IMP. The active-site Proton donor is the histidine 41. Residue 299-305 (ATTGRPR) coordinates substrate. GTP is bound by residues arginine 305, 331 to 333 (KLD), and 413 to 415 (SVG).

It belongs to the adenylosuccinate synthetase family. In terms of assembly, homodimer. Requires Mg(2+) as cofactor.

The protein localises to the cytoplasm. It carries out the reaction IMP + L-aspartate + GTP = N(6)-(1,2-dicarboxyethyl)-AMP + GDP + phosphate + 2 H(+). It functions in the pathway purine metabolism; AMP biosynthesis via de novo pathway; AMP from IMP: step 1/2. In terms of biological role, plays an important role in the de novo pathway of purine nucleotide biosynthesis. Catalyzes the first committed step in the biosynthesis of AMP from IMP. The polypeptide is Adenylosuccinate synthetase (Trichlorobacter lovleyi (strain ATCC BAA-1151 / DSM 17278 / SZ) (Geobacter lovleyi)).